The chain runs to 214 residues: Phosphatidylserine decarboxylase proenzyme (214 aa).

Serine 183 serves as the catalytic Schiff-base intermediate with substrate; via pyruvic acid. A Pyruvic acid (Ser); by autocatalysis modification is found at serine 183.

This sequence belongs to the phosphatidylserine decarboxylase family. PSD-A subfamily. In terms of assembly, heterodimer of a large membrane-associated beta subunit and a small pyruvoyl-containing alpha subunit. Pyruvate serves as cofactor. Post-translationally, is synthesized initially as an inactive proenzyme. Formation of the active enzyme involves a self-maturation process in which the active site pyruvoyl group is generated from an internal serine residue via an autocatalytic post-translational modification. Two non-identical subunits are generated from the proenzyme in this reaction, and the pyruvate is formed at the N-terminus of the alpha chain, which is derived from the carboxyl end of the proenzyme. The post-translation cleavage follows an unusual pathway, termed non-hydrolytic serinolysis, in which the side chain hydroxyl group of the serine supplies its oxygen atom to form the C-terminus of the beta chain, while the remainder of the serine residue undergoes an oxidative deamination to produce ammonia and the pyruvoyl prosthetic group on the alpha chain.

It localises to the cell membrane. It catalyses the reaction a 1,2-diacyl-sn-glycero-3-phospho-L-serine + H(+) = a 1,2-diacyl-sn-glycero-3-phosphoethanolamine + CO2. The protein operates within phospholipid metabolism; phosphatidylethanolamine biosynthesis; phosphatidylethanolamine from CDP-diacylglycerol: step 2/2. Its function is as follows. Catalyzes the formation of phosphatidylethanolamine (PtdEtn) from phosphatidylserine (PtdSer). The chain is Phosphatidylserine decarboxylase proenzyme from Syntrophotalea carbinolica (strain DSM 2380 / NBRC 103641 / GraBd1) (Pelobacter carbinolicus).